A 408-amino-acid polypeptide reads, in one-letter code: 3-ketoacyl-CoA thiolase B, peroxisomal (408 aa).

Catalysis depends on C112, which acts as the Acyl-thioester intermediate. Active-site proton acceptor residues include H366 and C394.

It belongs to the thiolase-like superfamily. Thiolase family. As to quaternary structure, homodimer.

The protein resides in the peroxisome. It catalyses the reaction an acyl-CoA + acetyl-CoA = a 3-oxoacyl-CoA + CoA. It functions in the pathway lipid metabolism; fatty acid metabolism. The sequence is that of 3-ketoacyl-CoA thiolase B, peroxisomal from Candida tropicalis (Yeast).